Consider the following 501-residue polypeptide: MSTANNNQPESISMNAFKQPKAFYLIFSIELWERFGYYGLQGIMAVYLVKMLGMSEADSITLFSSFSALVYGFVAIGGWLGDKVLGAKRVIVLGALTLAVGYSMIAYSGHEIFWVYLGMATIAVGNGLFKANPSSLLSTCYSKDDPRLDGAFTMYYMSINIGSFFSMLATPWLAAKYGWSVAFSLSVVGMLITLVNFWFCRKWVKNQGSKPDFLPLQFKKLLMVLVGIIALITLSNWLLHNQIIARWALALVSLGIIFIFTKETLFLQGIARRRMIVAFLLMLEAVIFFVLYSQMPTSLNFFAIHNVEHSIFGIGFEPEQFQALNPFWIMLASPILAAIYNKMGDRLPMPHKFAFGMMLCSAAFLVLPWGASFANEHGIVSVNWLILSYALQSIGELMISGLGLAMVAQLVPQRLMGFIMGSWFLTTAAAALIAGKVAALTAVPSDAITDAHASLAIYSHVFMQIGIVTAIIAVLMMLTAPKLYRMTLAPSDHNDVKIMTQ.

Over 1-34 (MSTANNNQPESISMNAFKQPKAFYLIFSIELWER) the chain is Cytoplasmic. Residues 35–55 (FGYYGLQGIMAVYLVKMLGMS) form a helical membrane-spanning segment. At 56–59 (EADS) the chain is on the periplasmic side. The chain crosses the membrane as a helical span at residues 60-80 (ITLFSSFSALVYGFVAIGGWL). Residues 81-89 (GDKVLGAKR) lie on the Cytoplasmic side of the membrane. 2 helical membrane passes run 90–110 (VIVLGALTLAVGYSMIAYSGH) and 111–131 (EIFWVYLGMATIAVGNGLFKA). The Periplasmic portion of the chain corresponds to 132–153 (NPSSLLSTCYSKDDPRLDGAFT). A helical transmembrane segment spans residues 154-174 (MYYMSINIGSFFSMLATPWLA). Topologically, residues 175-178 (AKYG) are cytoplasmic. Residues 179–199 (WSVAFSLSVVGMLITLVNFWF) form a helical membrane-spanning segment. The Periplasmic segment spans residues 200 to 220 (CRKWVKNQGSKPDFLPLQFKK). Residues 221-241 (LLMVLVGIIALITLSNWLLHN) form a helical membrane-spanning segment. At 242–246 (QIIAR) the chain is on the cytoplasmic side. Residues 247 to 267 (WALALVSLGIIFIFTKETLFL) form a helical membrane-spanning segment. The Periplasmic segment spans residues 268 to 274 (QGIARRR). Residues 275 to 295 (MIVAFLLMLEAVIFFVLYSQM) traverse the membrane as a helical segment. The Cytoplasmic portion of the chain corresponds to 296-320 (PTSLNFFAIHNVEHSIFGIGFEPEQ). The chain crosses the membrane as a helical span at residues 321-341 (FQALNPFWIMLASPILAAIYN). The Periplasmic segment spans residues 342 to 352 (KMGDRLPMPHK). A helical transmembrane segment spans residues 353–373 (FAFGMMLCSAAFLVLPWGASF). Over 374-383 (ANEHGIVSVN) the chain is Cytoplasmic. Residues 384 to 404 (WLILSYALQSIGELMISGLGL) form a helical membrane-spanning segment. The Periplasmic segment spans residues 405-414 (AMVAQLVPQR). The chain crosses the membrane as a helical span at residues 415-435 (LMGFIMGSWFLTTAAAALIAG). The Cytoplasmic portion of the chain corresponds to 436–460 (KVAALTAVPSDAITDAHASLAIYSH). Residues 461 to 481 (VFMQIGIVTAIIAVLMMLTAP) form a helical membrane-spanning segment. Residues 482–501 (KLYRMTLAPSDHNDVKIMTQ) are Periplasmic-facing.

Belongs to the major facilitator superfamily. Proton-dependent oligopeptide transporter (POT/PTR) (TC 2.A.17) family. DtpA subfamily.

It is found in the cell inner membrane. Functionally, proton-dependent permease that transports di- and tripeptides. The chain is Dipeptide and tripeptide permease A from Yersinia pestis.